Reading from the N-terminus, the 185-residue chain is Elongation factor P (185 aa).

It belongs to the elongation factor P family.

The protein resides in the cytoplasm. Its pathway is protein biosynthesis; polypeptide chain elongation. Functionally, involved in peptide bond synthesis. Stimulates efficient translation and peptide-bond synthesis on native or reconstituted 70S ribosomes in vitro. Probably functions indirectly by altering the affinity of the ribosome for aminoacyl-tRNA, thus increasing their reactivity as acceptors for peptidyl transferase. The sequence is that of Elongation factor P from Rippkaea orientalis (strain PCC 8801 / RF-1) (Cyanothece sp. (strain PCC 8801)).